Reading from the N-terminus, the 1217-residue chain is Myosin-1 (1217 aa).

The interval 1-26 (MAILKRTNRAKAATAAAPNSTGKSNG) is disordered. A compositionally biased stretch (low complexity) spans 10–19 (AKAATAAAPN). ATP-binding positions include 17 to 24 (APNSTGKS) and 133 to 140 (GESGAGKT). The Myosin motor domain maps to 40-720 (VGVDDLTLLS…TLFALEDMRD (681 aa)). S361 carries the post-translational modification Phosphoserine. Y363 bears the Phosphotyrosine mark. Positions 409–491 (SIGILDIYGF…PGLFAAMNDA (83 aa)) are actin-binding. 2 IQ domains span residues 724–744 (DTMATRIQRAWRSYVRRRSEA) and 745–770 (AACIQKLWNRNKVNMELERVRNEGTK). S742 is modified (phosphoserine). The region spanning 778 to 964 (RRRYSILGSR…TIHVGTGLPP (187 aa)) is the TH1 domain. S782 is subject to Phosphoserine. The segment at 961-1105 (GLPPTSKSKP…PPPPPPPAEV (145 aa)) is disordered. Over residues 998–1013 (KPVSMPAAKSKPAPMA) the composition is skewed to low complexity. Residues 1015 to 1025 (PVSTAQQTQNR) show a composition bias toward polar residues. The span at 1045–1075 (TSTTTTIKQATTVSASKPAPSTVTSAASSPS) shows a compositional bias: low complexity. Positions 1076 to 1088 (NISKPSAPVANNV) are enriched in polar residues. Pro residues predominate over residues 1093-1103 (AVPPPPPPPPA). Positions 1106 to 1165 (EKKDLYLALYDFAGRSPNEMTIKKDEIIEIVQKEPSGWWLALKNGAEGWVPATYVTEYKG) constitute an SH3 domain. The residue at position 1211 (S1211) is a Phosphoserine.

This sequence belongs to the TRAFAC class myosin-kinesin ATPase superfamily. Myosin family. As to quaternary structure, interacts with cam2. Interacts (via SH3 domain) with vrp1. Post-translationally, phosphorylation of the TEDS site (Ser-361) is required for the polarization of the actin cytoskeleton. Phosphorylation probably activates the myosin-I ATPase activity.

The protein localises to the cytoplasm. It localises to the cytoskeleton. Its subcellular location is the actin patch. Type-I myosin implicated in the organization of the actin cytoskeleton. Required for proper actin cytoskeleton polarization. At the cell cortex, assembles in patch-like structures together with proteins from the actin-polymerizing machinery and promotes actin assembly. Functions as actin nucleation-promoting factor (NPF) for the Arp2/3 complex. Contributes to proper septation by transporting vesicles containing septal material to the division site and is involved in the formation of sterol-rich membrane domains at the cell division site. Required also for mating. The protein is Myosin-1 (myo1) of Schizosaccharomyces pombe (strain 972 / ATCC 24843) (Fission yeast).